The following is a 236-amino-acid chain: Biosynthetic peptidoglycan transglycosylase (236 aa).

The chain crosses the membrane as a helical span at residues alanine 12–proline 31.

Belongs to the glycosyltransferase 51 family.

The protein localises to the cell inner membrane. The catalysed reaction is [GlcNAc-(1-&gt;4)-Mur2Ac(oyl-L-Ala-gamma-D-Glu-L-Lys-D-Ala-D-Ala)](n)-di-trans,octa-cis-undecaprenyl diphosphate + beta-D-GlcNAc-(1-&gt;4)-Mur2Ac(oyl-L-Ala-gamma-D-Glu-L-Lys-D-Ala-D-Ala)-di-trans,octa-cis-undecaprenyl diphosphate = [GlcNAc-(1-&gt;4)-Mur2Ac(oyl-L-Ala-gamma-D-Glu-L-Lys-D-Ala-D-Ala)](n+1)-di-trans,octa-cis-undecaprenyl diphosphate + di-trans,octa-cis-undecaprenyl diphosphate + H(+). The protein operates within cell wall biogenesis; peptidoglycan biosynthesis. Its function is as follows. Peptidoglycan polymerase that catalyzes glycan chain elongation from lipid-linked precursors. This Pseudomonas entomophila (strain L48) protein is Biosynthetic peptidoglycan transglycosylase.